Consider the following 130-residue polypeptide: Ribosome biogenesis inhibitor MINAS-60 (130 aa).

The segment at 61–130 is disordered; the sequence is SRVRRIPTRP…RRRRPVTSSC (70 aa). Positions 109 to 130 are enriched in basic residues; the sequence is KGRRRRRRRMRRRRRRPVTSSC.

As to quaternary structure, interacts with 60S ribosome assembly factors GTPBP4 and MRTO4.

It localises to the nucleus. The protein localises to the nucleolus. In terms of biological role, acts as a late-stage inhibitor of pre-60S ribosome assembly by preventing pre-60S ribosome export from nucleus. This is Ribosome biogenesis inhibitor MINAS-60 from Homo sapiens (Human).